A 438-amino-acid polypeptide reads, in one-letter code: GTPase Obg (438 aa).

Positions 2-160 (NMFVDQIKIE…HYLELELKML (159 aa)) constitute an Obg domain. The region spanning 161–337 (ADVGLIGFPS…LMQLTADLLD (177 aa)) is the OBG-type G domain. GTP contacts are provided by residues 167–174 (GFPSVGKS), 192–196 (FTTLT), 214–217 (DMPG), 284–287 (TKMD), and 318–320 (SAV). Mg(2+) is bound by residues Ser-174 and Thr-194. Residues 360–438 (PDKKDEADFT…IEKFVFEFIQ (79 aa)) form the OCT domain.

The protein belongs to the TRAFAC class OBG-HflX-like GTPase superfamily. OBG GTPase family. In terms of assembly, monomer. Mg(2+) serves as cofactor.

Its subcellular location is the cytoplasm. Its function is as follows. An essential GTPase which binds GTP, GDP and possibly (p)ppGpp with moderate affinity, with high nucleotide exchange rates and a fairly low GTP hydrolysis rate. Plays a role in control of the cell cycle, stress response, ribosome biogenesis and in those bacteria that undergo differentiation, in morphogenesis control. This is GTPase Obg from Limosilactobacillus reuteri (strain DSM 20016) (Lactobacillus reuteri).